A 185-amino-acid chain; its full sequence is Peptide deformylase (185 aa).

Fe cation contacts are provided by C94 and H136. Residue E137 is part of the active site. Position 140 (H140) interacts with Fe cation.

The protein belongs to the polypeptide deformylase family. Fe(2+) is required as a cofactor.

It carries out the reaction N-terminal N-formyl-L-methionyl-[peptide] + H2O = N-terminal L-methionyl-[peptide] + formate. Its function is as follows. Removes the formyl group from the N-terminal Met of newly synthesized proteins. Requires at least a dipeptide for an efficient rate of reaction. N-terminal L-methionine is a prerequisite for activity but the enzyme has broad specificity at other positions. The polypeptide is Peptide deformylase (Chlorobium phaeobacteroides (strain BS1)).